The sequence spans 294 residues: Large ribosomal subunit protein uL2 (294 aa).

Disordered regions lie at residues 1–37 (MGIRTFRPYTPSTRHMTVSNFEELSRDENGKRPRPEK) and 228–294 (GSVM…RAAQ). Over residues 10-22 (TPSTRHMTVSNFE) the composition is skewed to polar residues. Basic and acidic residues predominate over residues 23-37 (ELSRDENGKRPRPEK). Residues 264 to 285 (KTRKRNKPSNKFIVRGRRRGGR) show a composition bias toward basic residues.

The protein belongs to the universal ribosomal protein uL2 family. As to quaternary structure, part of the 50S ribosomal subunit. Forms a bridge to the 30S subunit in the 70S ribosome.

One of the primary rRNA binding proteins. Required for association of the 30S and 50S subunits to form the 70S ribosome, for tRNA binding and peptide bond formation. It has been suggested to have peptidyltransferase activity; this is somewhat controversial. Makes several contacts with the 16S rRNA in the 70S ribosome. This Synechococcus sp. (strain JA-3-3Ab) (Cyanobacteria bacterium Yellowstone A-Prime) protein is Large ribosomal subunit protein uL2.